A 64-amino-acid polypeptide reads, in one-letter code: Putative antitoxin VapB4 (64 aa).

Belongs to the UPF0165 family.

Functionally, possibly the antitoxin component of a type II toxin-antitoxin (TA) system. Its cognate toxin is VapC4 (Potential). The sequence is that of Putative antitoxin VapB4 (vapB4) from Archaeoglobus fulgidus (strain ATCC 49558 / DSM 4304 / JCM 9628 / NBRC 100126 / VC-16).